A 222-amino-acid chain; its full sequence is Putative N-acetylmannosamine-6-phosphate 2-epimerase (222 aa).

This sequence belongs to the NanE family.

The enzyme catalyses an N-acyl-D-glucosamine 6-phosphate = an N-acyl-D-mannosamine 6-phosphate. The protein operates within amino-sugar metabolism; N-acetylneuraminate degradation; D-fructose 6-phosphate from N-acetylneuraminate: step 3/5. Its function is as follows. Converts N-acetylmannosamine-6-phosphate (ManNAc-6-P) to N-acetylglucosamine-6-phosphate (GlcNAc-6-P). The protein is Putative N-acetylmannosamine-6-phosphate 2-epimerase of Staphylococcus saprophyticus subsp. saprophyticus (strain ATCC 15305 / DSM 20229 / NCIMB 8711 / NCTC 7292 / S-41).